A 338-amino-acid polypeptide reads, in one-letter code: Probable O-antigen biosynthesis glycosyltransferase WbiN (338 aa).

This sequence belongs to the glycosyltransferase group 1 family. Glycosyltransferase 4 subfamily.

The catalysed reaction is N-acetyl-alpha-D-galactosaminyl-di-trans,octa-cis-undecaprenyl diphosphate + UDP-N-acetyl-alpha-D-galactosamine = alpha-D-GalNAc-(1-&gt;3)-alpha-D-GalNAc-di-trans,octa-cis-undecaprenyl diphosphate + UDP + H(+). The protein operates within bacterial outer membrane biogenesis; LPS O-antigen biosynthesis. Involved in the assembly of the O-repeating unit during O-antigen biosynthesis. This Escherichia coli protein is Probable O-antigen biosynthesis glycosyltransferase WbiN.